The chain runs to 110 residues: MTELIRIAALFAVTAVAEIVGCYLPWLVLKGGRPVWLLVPAALSLALFAWLLTLHPSAAGRTYAAYGGVYIGVALLWLRVVDGVALTRWDAAGAALALGGMAMIALQPRA.

3 consecutive transmembrane segments (helical) span residues 9 to 29 (ALFAVTAVAEIVGCYLPWLVL), 34 to 54 (PVWLLVPAALSLALFAWLLTL), and 66 to 86 (YGGVYIGVALLWLRVVDGVAL).

The protein belongs to the UPF0060 family.

The protein resides in the cell inner membrane. This is UPF0060 membrane protein Bcep1808_1236 from Burkholderia vietnamiensis (strain G4 / LMG 22486) (Burkholderia cepacia (strain R1808)).